We begin with the raw amino-acid sequence, 272 residues long: Hydroxyacylglutathione hydrolase (272 aa).

Positions 62, 64, 66, 67, 126, 146, and 184 each coordinate Zn(2+).

It belongs to the metallo-beta-lactamase superfamily. Glyoxalase II family. As to quaternary structure, monomer. Zn(2+) serves as cofactor.

The enzyme catalyses an S-(2-hydroxyacyl)glutathione + H2O = a 2-hydroxy carboxylate + glutathione + H(+). The protein operates within secondary metabolite metabolism; methylglyoxal degradation; (R)-lactate from methylglyoxal: step 2/2. In terms of biological role, thiolesterase that catalyzes the hydrolysis of S-D-lactoyl-glutathione to form glutathione and D-lactic acid. The sequence is that of Hydroxyacylglutathione hydrolase from Saccharophagus degradans (strain 2-40 / ATCC 43961 / DSM 17024).